Here is a 1108-residue protein sequence, read N- to C-terminus: Ubiquitin carboxyl-terminal hydrolase 5 (1108 aa).

An MATH domain is found at 55 to 187; the sequence is FQRFTWHIKS…DGALLLTAYV (133 aa). Catalysis depends on nucleophile residues C120 and C222. The USP domain occupies 213–528; it reads VGLKNQGATC…SAYMLLYLRK (316 aa). Catalysis depends on H464, which acts as the Proton acceptor.

It belongs to the peptidase C19 family.

It localises to the nucleus. The catalysed reaction is Thiol-dependent hydrolysis of ester, thioester, amide, peptide and isopeptide bonds formed by the C-terminal Gly of ubiquitin (a 76-residue protein attached to proteins as an intracellular targeting signal).. In terms of biological role, hydrolase that deubiquitinates target proteins. Cleaves the UBL propeptide in sde2. The protein is Ubiquitin carboxyl-terminal hydrolase 5 (ubp5) of Schizosaccharomyces pombe (strain 972 / ATCC 24843) (Fission yeast).